The primary structure comprises 151 residues: Small ribosomal subunit protein uS11 (151 aa).

A Phosphoserine modification is found at S16. Residues K61, K63, and K106 each participate in a glycyl lysine isopeptide (Lys-Gly) (interchain with G-Cter in SUMO2) cross-link. The segment at 131 to 151 (DVTPIPSDSTRRKGGRRGRRL) is disordered. Residue T133 is modified to Phosphothreonine. The residue at position 139 (S139) is a Phosphoserine. A compositionally biased stretch (basic residues) spans 142–151 (RKGGRRGRRL).

It belongs to the universal ribosomal protein uS11 family. In terms of assembly, component of the small ribosomal subunit. Part of the small subunit (SSU) processome, composed of more than 70 proteins and the RNA chaperone small nucleolar RNA (snoRNA) U3.

Its subcellular location is the cytoplasm. The protein resides in the nucleus. It localises to the nucleolus. Component of the small ribosomal subunit. The ribosome is a large ribonucleoprotein complex responsible for the synthesis of proteins in the cell. Part of the small subunit (SSU) processome, first precursor of the small eukaryotic ribosomal subunit. During the assembly of the SSU processome in the nucleolus, many ribosome biogenesis factors, an RNA chaperone and ribosomal proteins associate with the nascent pre-rRNA and work in concert to generate RNA folding, modifications, rearrangements and cleavage as well as targeted degradation of pre-ribosomal RNA by the RNA exosome. The sequence is that of Small ribosomal subunit protein uS11 (Rps14) from Mus musculus (Mouse).